The sequence spans 898 residues: MLALNAGSQYPGRGRGRGRGDGGNRVHKHDGINRYHGGFRGGRGGGGGGFRDGDMRECRERESWAVSAAQANARTLARVPVPVETNCFPIDLSEGRFHNYIVSFEFLENATDMAGDMWKISLQNELLRTIRKNRTAEKRTRTSAEVEDLCVCTGQAILAPAKLSVEDGFSIECTRKEKVSRNNTEERHYRVRIRYDGEVSLKLPEHAQWVNKIIAFGLADTYSEHIGSDYVDMKSTVERGGDLVTMDAISLNALRIVKQSGSTTAMMDVLQLDVSTKASTKTKCSDEMRRLRQQNPQGFRRAVNEALVGISVTTVFGEPTFLKVKAIDFNILASSPTMFKTNPEETFVEYFKRKYDAIIDPTLPMLYCIFADRTKMSRRMPYPADSLLLNKLNEAQLSKLPILCSIYPNERMKRIKAALERVLASPLMITVLQQYGVRIQPQFVKVSGRVLPAPTIYVPSGPNMFNRINTAEYTGQAGFALGLKDLQHPSQPCEFKTLLMDEYFMHGNITHWLQKYNVALPSPRKTSFDSAAQRITEGPGTFAMVKLRTKEAGAYNNFKERFARSSIVSQMAVVDLTRNVPQMITQQVAAKIGQLCFVADVDEAGKSFACRPLLIVGAVVGTAMNTMLEKYKSINVRLYTITFVAFLANGKSWKPYCMHHQVKGEEHVLYEDSDAASSHMSSTTLTVRRQNANEVLNNRFPDFLKEVTAHFKLNGKGSKGTMVLYRGAMTDAEVGFTANMDLVMEQVLPNWDTATVVVHPRSHFRMAWDPTTVFPHETASAYAGLSNVPRGFSTTDCRIILADSDPYTPVDSFYLSAANCTLGHAANTYYLVQKRAASISLMDLQKLTYNMCYMYPNKPDALPLPLPIKCAYEYARKYGSLKSVKELPTRMRPTMHYL.

The disordered stretch occupies residues 1–52; the sequence is MLALNAGSQYPGRGRGRGRGDGGNRVHKHDGINRYHGGFRGGRGGGGGGFRD. The segment covering 18–33 has biased composition (basic and acidic residues); it reads GRGDGGNRVHKHDGIN. Residues 38–50 are compositionally biased toward gly residues; that stretch reads GFRGGRGGGGGGF. Residues 283 to 378 enclose the PAZ domain; that stretch reads KCSDEMRRLR…IFADRTKMSR (96 aa). The Piwi domain occupies 542–883; the sequence is FAMVKLRTKE…YARKYGSLKS (342 aa).

It belongs to the argonaute family.

Its subcellular location is the cytoplasm. In terms of biological role, involved in RNA-mediated gene silencing (RNAi) of mobile elements and repeats including retroposons SLACS (Spliced Leader Associated Conserved Sequence), TATE (Telomere-Associated Transposable Element) and TAS-like sequences (Telomere Associated Sequence), and a family of 74-nucleotide long tandem repeats, CIR74. Predominantly binds to siRNAs derived from SLACS and TATE transposable elements and to a lesser extent to siRNAs from TAS-like and CIR74 elements. The polypeptide is Protein argonaute 1 (Leishmania braziliensis).